Consider the following 32-residue polypeptide: U3-ctenitoxin-Pk1a (32 aa).

3 cysteine pairs are disulfide-bonded: C3-C17, C10-C21, and C16-C30.

Belongs to the neurotoxin 17 (21C2) family. As to expression, expressed by the venom gland.

The protein resides in the secreted. May act as a neurotoxin. This Phoneutria keyserlingi (Brazilian wandering spider) protein is U3-ctenitoxin-Pk1a.